Here is a 696-residue protein sequence, read N- to C-terminus: Elongation factor G (696 aa).

One can recognise a tr-type G domain in the interval 10–290 (THFRNIGIAA…AVVDYLPSPL (281 aa)). GTP contacts are provided by residues 19–26 (AHIDAGKT), 89–93 (DTPGH), and 143–146 (NKMD).

Belongs to the TRAFAC class translation factor GTPase superfamily. Classic translation factor GTPase family. EF-G/EF-2 subfamily.

It localises to the cytoplasm. Catalyzes the GTP-dependent ribosomal translocation step during translation elongation. During this step, the ribosome changes from the pre-translocational (PRE) to the post-translocational (POST) state as the newly formed A-site-bound peptidyl-tRNA and P-site-bound deacylated tRNA move to the P and E sites, respectively. Catalyzes the coordinated movement of the two tRNA molecules, the mRNA and conformational changes in the ribosome. The sequence is that of Elongation factor G from Deinococcus geothermalis (strain DSM 11300 / CIP 105573 / AG-3a).